Here is a 276-residue protein sequence, read N- to C-terminus: Diaminopimelate epimerase (276 aa).

Asparagine 13, glutamine 46, and asparagine 66 together coordinate substrate. Catalysis depends on cysteine 75, which acts as the Proton donor. Residues 76-77 (GN), asparagine 159, asparagine 192, and 210-211 (ER) each bind substrate. Cysteine 219 acts as the Proton acceptor in catalysis. 220-221 (GT) serves as a coordination point for substrate.

It belongs to the diaminopimelate epimerase family. As to quaternary structure, homodimer.

Its subcellular location is the cytoplasm. The catalysed reaction is (2S,6S)-2,6-diaminopimelate = meso-2,6-diaminopimelate. It participates in amino-acid biosynthesis; L-lysine biosynthesis via DAP pathway; DL-2,6-diaminopimelate from LL-2,6-diaminopimelate: step 1/1. Its function is as follows. Catalyzes the stereoinversion of LL-2,6-diaminopimelate (L,L-DAP) to meso-diaminopimelate (meso-DAP), a precursor of L-lysine and an essential component of the bacterial peptidoglycan. The polypeptide is Diaminopimelate epimerase (Ectopseudomonas mendocina (strain ymp) (Pseudomonas mendocina)).